A 106-amino-acid polypeptide reads, in one-letter code: Transcription initiation factor IIA subunit 2 (106 aa).

The protein belongs to the TFIIA subunit 2 family. As to quaternary structure, TFIIA is a heterodimer of the large unprocessed subunit 1 and a small subunit gamma. It was originally believed to be a heterotrimer of an alpha, a beta and a gamma subunit.

The protein localises to the nucleus. TFIIA is a component of the transcription machinery of RNA polymerase II and plays an important role in transcriptional activation. TFIIA in a complex with TBP mediates transcriptional activity. The chain is Transcription initiation factor IIA subunit 2 (TFIIA-S) from Arabidopsis thaliana (Mouse-ear cress).